A 776-amino-acid chain; its full sequence is Protein SEY1 (776 aa).

The Cytoplasmic segment spans residues 1–681 (MADRPAIQLI…KRSIITTRTH (681 aa)). Residues 34 to 263 (GLDYHVISVF…TENYYFKPQY (230 aa)) form the GB1/RHD3-type G domain. Position 44–51 (44–51 (GSQSSGKS)) interacts with GTP. Residues 682-702 (IPPWIYVLLAVLGWNEFVAVI) traverse the membrane as a helical segment. Topologically, residues 703 to 705 (RNP) are lumenal. The chain crosses the membrane as a helical span at residues 706–726 (LFVTLTLILGATFFVIHKFGL). Residues 727-776 (WGPVVNVVQSAVGETRTAIKDKLRQFVVEDHEVKESFEMKDFSKNEQKEK) are Cytoplasmic-facing.

The protein belongs to the TRAFAC class dynamin-like GTPase superfamily. GB1/RHD3 GTPase family. RHD3 subfamily. As to quaternary structure, interacts with RTN1 and YOP1; GTP binding is not required for these interactions.

It is found in the endoplasmic reticulum membrane. In terms of biological role, cooperates with the reticulon proteins RTN1 and RTN2 and the tubule-shaping DP1 family protein YOP1 to generate and maintain the structure of the tubular endoplasmic reticulum network. Has GTPase activity, which is required for its function in ER organization. The protein is Protein SEY1 of Saccharomyces cerevisiae (strain ATCC 204508 / S288c) (Baker's yeast).